The following is a 497-amino-acid chain: Glutamate--tRNA ligase (497 aa).

The 'HIGH' region motif lies at 12-22 (PSPTGHLHIGN). The 'KMSKS' region signature appears at 259–263 (KLSKR). Lys262 contacts ATP.

It belongs to the class-I aminoacyl-tRNA synthetase family. Glutamate--tRNA ligase type 1 subfamily. Monomer.

The protein localises to the cytoplasm. The catalysed reaction is tRNA(Glu) + L-glutamate + ATP = L-glutamyl-tRNA(Glu) + AMP + diphosphate. Its function is as follows. Catalyzes the attachment of glutamate to tRNA(Glu) in a two-step reaction: glutamate is first activated by ATP to form Glu-AMP and then transferred to the acceptor end of tRNA(Glu). In Lacticaseibacillus casei (strain BL23) (Lactobacillus casei), this protein is Glutamate--tRNA ligase.